The sequence spans 367 residues: 2-oxoisovalerate dehydrogenase subunit alpha (367 aa).

Substrate contacts are provided by residues Phe-66, Tyr-95, 128-131 (MPEH), and Ser-144. Thiamine diphosphate is bound at residue 94–96 (YYR). Thiamine diphosphate is bound by residues 144 to 146 (SPI), 174 to 180 (GDGATSE), 204 to 208 (NFYAI), and His-273. Mg(2+) contacts are provided by Asp-175, Asn-204, and Tyr-206.

This sequence belongs to the BCKDHA family. As to quaternary structure, heterotetramer of two alpha and two beta chains. Directly associated with ODBB in the E1 complex. Thiamine diphosphate serves as cofactor.

The enzyme catalyses N(6)-[(R)-lipoyl]-L-lysyl-[protein] + 3-methyl-2-oxobutanoate + H(+) = N(6)-[(R)-S(8)-2-methylpropanoyldihydrolipoyl]-L-lysyl-[protein] + CO2. The branched-chain alpha-keto dehydrogenase complex catalyzes the overall conversion of alpha-keto acids to acyl-CoA and CO(2). It contains multiple copies of three enzymatic components: branched-chain alpha-keto acid decarboxylase (E1), lipoamide acyltransferase (E2) and lipoamide dehydrogenase (E3). The polypeptide is 2-oxoisovalerate dehydrogenase subunit alpha (Thermus thermophilus (strain ATCC 27634 / DSM 579 / HB8)).